The following is a 460-amino-acid chain: Argininosuccinate lyase (460 aa).

Belongs to the lyase 1 family. Argininosuccinate lyase subfamily.

Its subcellular location is the cytoplasm. The catalysed reaction is 2-(N(omega)-L-arginino)succinate = fumarate + L-arginine. It functions in the pathway amino-acid biosynthesis; L-arginine biosynthesis; L-arginine from L-ornithine and carbamoyl phosphate: step 3/3. The protein is Argininosuccinate lyase of Streptococcus uberis (strain ATCC BAA-854 / 0140J).